The chain runs to 71 residues: uncharacterized protein (71 aa).

This sequence belongs to the varicellovirus ORF57 protein family.

This is an uncharacterized protein from Homo sapiens (Human).